A 244-amino-acid polypeptide reads, in one-letter code: Trypsin (244 aa).

Positions 1–15 are cleaved as a signal peptide; sequence MKFLVILVLLGAAVA. Positions 16–21 are cleaved as a propeptide — activation peptide; it reads FEDDDK. The region spanning 22-242 is the Peptidase S1 domain; sequence IVGGFTCAKN…FVTWIQSTIS (221 aa). 6 disulfide bridges follow: cysteine 28/cysteine 158, cysteine 46/cysteine 62, cysteine 130/cysteine 231, cysteine 137/cysteine 204, cysteine 169/cysteine 183, and cysteine 194/cysteine 218. Histidine 61 functions as the Charge relay system in the catalytic mechanism. Ca(2+) is bound by residues glutamate 73, asparagine 75, and glutamate 83. Aspartate 105 acts as the Charge relay system in catalysis. The Charge relay system role is filled by serine 198.

Belongs to the peptidase S1 family. Ca(2+) serves as cofactor.

Its subcellular location is the secreted. The protein localises to the extracellular space. The catalysed reaction is Preferential cleavage: Arg-|-Xaa, Lys-|-Xaa.. The polypeptide is Trypsin (Xenopus laevis (African clawed frog)).